The primary structure comprises 117 residues: MAGKKKNDRHVEGDEVIRVPLPDRSKGQLFGVIEQALGAGWMDVRCEDGKVRRCRIPGKLKRRMWMRVGDVVIVQPWPVQSDERGDIVYRYTRTQVDWLLRKGKITQDFLSGGELLF.

In terms of domain architecture, S1-like spans 17–92; sequence IRVPLPDRSK…ERGDIVYRYT (76 aa).

Belongs to the eIF-1A family.

In terms of biological role, seems to be required for maximal rate of protein biosynthesis. Enhances ribosome dissociation into subunits and stabilizes the binding of the initiator Met-tRNA(I) to 40 S ribosomal subunits. The sequence is that of Translation initiation factor 1A from Thermococcus kodakarensis (strain ATCC BAA-918 / JCM 12380 / KOD1) (Pyrococcus kodakaraensis (strain KOD1)).